The sequence spans 233 residues: Small ribosomal subunit protein uS3 (233 aa).

Positions 39 to 107 (VREFLKKRLG…PVHVNIEEVR (69 aa)) constitute a KH type-2 domain. A disordered region spans residues 212-233 (VQATPAAPEKKMRKGARNAAAN).

Belongs to the universal ribosomal protein uS3 family. Part of the 30S ribosomal subunit. Forms a tight complex with proteins S10 and S14.

Binds the lower part of the 30S subunit head. Binds mRNA in the 70S ribosome, positioning it for translation. The protein is Small ribosomal subunit protein uS3 of Chromobacterium violaceum (strain ATCC 12472 / DSM 30191 / JCM 1249 / CCUG 213 / NBRC 12614 / NCIMB 9131 / NCTC 9757 / MK).